Consider the following 341-residue polypeptide: Uroporphyrinogen decarboxylase (341 aa).

Residues 25–29 (RQAGR), Phe44, Asp74, Tyr151, Ser206, and His318 contribute to the substrate site.

This sequence belongs to the uroporphyrinogen decarboxylase family. Homodimer.

The protein resides in the cytoplasm. The catalysed reaction is uroporphyrinogen III + 4 H(+) = coproporphyrinogen III + 4 CO2. Its pathway is porphyrin-containing compound metabolism; protoporphyrin-IX biosynthesis; coproporphyrinogen-III from 5-aminolevulinate: step 4/4. In terms of biological role, catalyzes the decarboxylation of four acetate groups of uroporphyrinogen-III to yield coproporphyrinogen-III. The sequence is that of Uroporphyrinogen decarboxylase from Christiangramia forsetii (strain DSM 17595 / CGMCC 1.15422 / KT0803) (Gramella forsetii).